The following is an 84-amino-acid chain: MRKGIHPEYRPVVFRDRAADYAFLTRSTMTSERTVEWEDGRTYPVVDVEVSHVSHPFYTGTARVLDTAGRVERFERRYGKQDGA.

It belongs to the bacterial ribosomal protein bL31 family. Type B subfamily. In terms of assembly, part of the 50S ribosomal subunit.

This Streptomyces coelicolor (strain ATCC BAA-471 / A3(2) / M145) protein is Large ribosomal subunit protein bL31B-2.